The chain runs to 432 residues: MYPGSGRYTYNNAGGNNGYQRPMAPPPNQQYGQQYGQQYEQQYGQQYGQQNDQQFSQQYAPPPGPPPMAYNRPVYPPPQFQQEQAKAQLSNGYNNPNVNASNMYGPPQNMSLPPPQTQTIQGTDQPYQYSQCTGRRKALIIGINYIGSKNQLRGCINDAHNIFNFLTNGYGYSSDDIVILTDDQNDLVRVPTRANMIRAMQWLVKDAQPNDSLFLHYSGHGGQTEDLDGDEEDGMDDVIYPVDFETQGPIIDDEMHDIMVKPLQQGVRLTALFDSCHSGTVLDLPYTYSTKGIIKEPNIWKDVGQDGLQAAISYATGNRAALIGSLGSIFKTVKGGMGNNVDRERVRQIKFSAADVVMLSGSKDNQTSADAVEDGQNTGAMSHAFIKVMTLQPQQSYLSLLQNMRKELAGKYSQKPQLSSSHPIDVNLQFIM.

2 stretches are compositionally biased toward low complexity: residues 1–14 (MYPG…NNAG) and 29–59 (QQYG…SQQY). Positions 1 to 70 (MYPGSGRYTY…PPPGPPPMAY (70 aa)) are disordered. A compositionally biased stretch (pro residues) spans 60 to 70 (APPPGPPPMAY). Catalysis depends on residues histidine 220 and cysteine 276.

Belongs to the peptidase C14B family.

Its subcellular location is the cytoplasm. It is found in the nucleus. Mediates cell death (apoptosis) triggered by oxygen stress, salt stress or chronological aging. Regulated cell death can prevent a release of toxic cellular components, thus avoiding necrotic collapse of the colony, and can also provide nutrients for healthy cells. Therefore, regulated cell death in yeast colonies can be as important for their development as are apoptosis and related processes that occur within metazoa. The sequence is that of Metacaspase-1 (MCA1) from Saccharomyces cerevisiae (strain YJM789) (Baker's yeast).